We begin with the raw amino-acid sequence, 343 residues long: Protein RecA (343 aa).

66 to 73 (GPESSGKT) contacts ATP.

The protein belongs to the RecA family.

It is found in the cytoplasm. Its function is as follows. Can catalyze the hydrolysis of ATP in the presence of single-stranded DNA, the ATP-dependent uptake of single-stranded DNA by duplex DNA, and the ATP-dependent hybridization of homologous single-stranded DNAs. It interacts with LexA causing its activation and leading to its autocatalytic cleavage. This Rickettsia massiliae (strain Mtu5) protein is Protein RecA.